The sequence spans 594 residues: Aspartate--tRNA(Asp/Asn) ligase (594 aa).

Glu-175 serves as a coordination point for L-aspartate. The interval 199–202 is aspartate; sequence QLFK. L-aspartate is bound at residue Arg-221. Residues 221 to 223 and Gln-230 contribute to the ATP site; that span reads RDE. L-aspartate is bound at residue His-446. Glu-492 contributes to the ATP binding site. Position 499 (Arg-499) interacts with L-aspartate. 544 to 547 contributes to the ATP binding site; that stretch reads GFDR.

This sequence belongs to the class-II aminoacyl-tRNA synthetase family. Type 1 subfamily. Homodimer.

It is found in the cytoplasm. The catalysed reaction is tRNA(Asx) + L-aspartate + ATP = L-aspartyl-tRNA(Asx) + AMP + diphosphate. Aspartyl-tRNA synthetase with relaxed tRNA specificity since it is able to aspartylate not only its cognate tRNA(Asp) but also tRNA(Asn). Reaction proceeds in two steps: L-aspartate is first activated by ATP to form Asp-AMP and then transferred to the acceptor end of tRNA(Asp/Asn). This chain is Aspartate--tRNA(Asp/Asn) ligase, found in Hydrogenobaculum sp. (strain Y04AAS1).